Consider the following 231-residue polypeptide: MTDNDDRIKLEASWKEALREEFDKPYMKQLGEFLRQEKAAGKVIFPPGPLIFNALNTTPLENVKVVIIGQDPYHGPGQAHGLCFSVQPGVPTPPSLQNIYKELNRDLNIPIPNNGYLQRWAEQGVLLLNTSLTVEQAKAGSHANAGWQPFTDRVIEVVNERCERLVFLLWGSHAQSKQKLIDPQRHLILKSAHPSPLSAYRGFLGNGHFSRTNKFLEQNGKTPIDWSLPDL.

The active-site Proton acceptor is the Asp-71.

Belongs to the uracil-DNA glycosylase (UDG) superfamily. UNG family.

It localises to the cytoplasm. It catalyses the reaction Hydrolyzes single-stranded DNA or mismatched double-stranded DNA and polynucleotides, releasing free uracil.. Excises uracil residues from the DNA which can arise as a result of misincorporation of dUMP residues by DNA polymerase or due to deamination of cytosine. The sequence is that of Uracil-DNA glycosylase from Pseudomonas aeruginosa (strain ATCC 15692 / DSM 22644 / CIP 104116 / JCM 14847 / LMG 12228 / 1C / PRS 101 / PAO1).